We begin with the raw amino-acid sequence, 577 residues long: Zinc finger-containing ubiquitin peptidase 1 (577 aa).

Residues 2 to 24 form a C2H2-type 1 zinc finger; it reads LSCDICGETVTSEPDRKAHLIVH. The C2H2-type 2; atypical zinc-finger motif lies at 29 to 52; the sequence is IICPFCKLSGINYNEMCFHIETAH. C2H2-type zinc fingers lie at residues 153–176 and 192–214; these read PECP…KTKH and YDCP…VDLH. The MIU stretch occupies residues 225 to 247; sequence DRVQCSSDRELAHQLQQEEERKR. Over residues 231-261 the composition is skewed to basic and acidic residues; the sequence is SDRELAHQLQQEEERKRKSEESRQEREEFQK. Residues 231–262 are disordered; the sequence is SDRELAHQLQQEEERKRKSEESRQEREEFQKL. A zUBD/ZHA region spans residues 248–273; that stretch reads KSEESRQEREEFQKLQRQYGLDNSGG. Lys261 is subject to N6-acetyllysine. Residue Cys359 is the Nucleophile of the active site. His490 (proton acceptor) is an active-site residue. Asp511 is an active-site residue.

Belongs to the peptidase C78 family. ZUFSP subfamily. In terms of assembly, interacts with RPA1 and RPA2.

Its subcellular location is the cytoplasm. The protein resides in the nucleus. The catalysed reaction is Thiol-dependent hydrolysis of ester, thioester, amide, peptide and isopeptide bonds formed by the C-terminal Gly of ubiquitin (a 76-residue protein attached to proteins as an intracellular targeting signal).. In terms of biological role, deubiquitinase with endodeubiquitinase activity that specifically interacts with and cleaves 'Lys-63'-linked long polyubiquitin chains. Shows only weak activity against 'Lys-11' and 'Lys-48'-linked chains. Plays an important role in genome stability pathways, functioning to prevent spontaneous DNA damage and also promote cellular survival in response to exogenous DNA damage. Modulates the ubiquitination status of replication protein A (RPA) complex proteins in response to replication stress. In Rattus norvegicus (Rat), this protein is Zinc finger-containing ubiquitin peptidase 1.